The sequence spans 140 residues: Putative pre-16S rRNA nuclease (140 aa).

This sequence belongs to the YqgF nuclease family.

It localises to the cytoplasm. Functionally, could be a nuclease involved in processing of the 5'-end of pre-16S rRNA. This Chlorobium chlorochromatii (strain CaD3) protein is Putative pre-16S rRNA nuclease.